The primary structure comprises 209 residues: Orotate phosphoribosyltransferase (209 aa).

5-phospho-alpha-D-ribose 1-diphosphate-binding positions include Arg-96, Lys-100, His-102, and 122 to 130; that span reads EDLISTGGS. Ser-126 lines the orotate pocket.

This sequence belongs to the purine/pyrimidine phosphoribosyltransferase family. PyrE subfamily. As to quaternary structure, homodimer. The cofactor is Mg(2+).

It carries out the reaction orotidine 5'-phosphate + diphosphate = orotate + 5-phospho-alpha-D-ribose 1-diphosphate. It functions in the pathway pyrimidine metabolism; UMP biosynthesis via de novo pathway; UMP from orotate: step 1/2. Its function is as follows. Catalyzes the transfer of a ribosyl phosphate group from 5-phosphoribose 1-diphosphate to orotate, leading to the formation of orotidine monophosphate (OMP). The chain is Orotate phosphoribosyltransferase from Listeria innocua serovar 6a (strain ATCC BAA-680 / CLIP 11262).